A 139-amino-acid polypeptide reads, in one-letter code: Putative pre-16S rRNA nuclease (139 aa).

The protein belongs to the YqgF nuclease family.

Its subcellular location is the cytoplasm. Could be a nuclease involved in processing of the 5'-end of pre-16S rRNA. The polypeptide is Putative pre-16S rRNA nuclease (Streptococcus pneumoniae serotype 19F (strain G54)).